We begin with the raw amino-acid sequence, 556 residues long: Formate--tetrahydrofolate ligase (556 aa).

Residue 65 to 72 (TPAGEGKS) coordinates ATP.

This sequence belongs to the formate--tetrahydrofolate ligase family.

The catalysed reaction is (6S)-5,6,7,8-tetrahydrofolate + formate + ATP = (6R)-10-formyltetrahydrofolate + ADP + phosphate. It participates in one-carbon metabolism; tetrahydrofolate interconversion. This Streptococcus thermophilus (strain ATCC BAA-491 / LMD-9) protein is Formate--tetrahydrofolate ligase.